The following is a 545-amino-acid chain: CTP synthase (545 aa).

The segment at 1–266 (MTTRYIFVTG…DELVIKRFNI (266 aa)) is amidoligase domain. Residue Ser-14 participates in CTP binding. Ser-14 provides a ligand contact to UTP. ATP contacts are provided by residues 15–20 (SLGKGI) and Asp-72. 2 residues coordinate Mg(2+): Asp-72 and Glu-140. CTP contacts are provided by residues 147–149 (DIE), 187–192 (KTKPTQ), and Lys-223. UTP contacts are provided by residues 187–192 (KTKPTQ) and Lys-223. 239 to 241 (KDV) is an ATP binding site. In terms of domain architecture, Glutamine amidotransferase type-1 spans 291 to 542 (TIGMVGKYIE…IAASLSHQKR (252 aa)). Gly-352 serves as a coordination point for L-glutamine. Cys-379 serves as the catalytic Nucleophile; for glutamine hydrolysis. L-glutamine-binding positions include 380-383 (LGMQ), Glu-403, and Arg-470. Catalysis depends on residues His-515 and Glu-517.

It belongs to the CTP synthase family. In terms of assembly, homotetramer.

It carries out the reaction UTP + L-glutamine + ATP + H2O = CTP + L-glutamate + ADP + phosphate + 2 H(+). It catalyses the reaction L-glutamine + H2O = L-glutamate + NH4(+). The catalysed reaction is UTP + NH4(+) + ATP = CTP + ADP + phosphate + 2 H(+). It functions in the pathway pyrimidine metabolism; CTP biosynthesis via de novo pathway; CTP from UDP: step 2/2. With respect to regulation, allosterically activated by GTP, when glutamine is the substrate; GTP has no effect on the reaction when ammonia is the substrate. The allosteric effector GTP functions by stabilizing the protein conformation that binds the tetrahedral intermediate(s) formed during glutamine hydrolysis. Inhibited by the product CTP, via allosteric rather than competitive inhibition. Catalyzes the ATP-dependent amination of UTP to CTP with either L-glutamine or ammonia as the source of nitrogen. Regulates intracellular CTP levels through interactions with the four ribonucleotide triphosphates. This is CTP synthase from Shewanella denitrificans (strain OS217 / ATCC BAA-1090 / DSM 15013).